A 431-amino-acid chain; its full sequence is MKAVRINERLTIAGQPMIADFPSLSAQGFKSIINARPDGEEPGQPGNTQEKSAAGAAGMDYGFIPVSGPTITEADIRAFQQKMAEAEGPVFAHCKGGTRALTLYVLGEALDGRIQRSDIEDFGKTHGFDLCAATRWLERQSAAVPHIKAFFDPRTWSVQYVVSDPATGGCAIIDPVYDFDEKSGATGTMNADAILDYVKRHGLSVEWILDTHPHADHFSAADYLKQKTGAKTAIGAKVTGVQKLWQEKYNWSDFKTDGSQWDQLFEAGDRFSIGSLEARVLFSPGHTLASVTYVVGNAAFVHDTLFMPDSGTARADFPGGSAKQLWASIQDILALPDDTRLFTGHDYQPGGRAPKWESTVGEQTRSNPHLAGMTEEDFVRLREARDRTLPMPKLILHALQVNIRGGRLPEPEANGKHYLKFPLDVLEGSTW.

H212, H214, and H286 together coordinate Zn(2+). A substrate-binding site is contributed by D309.

Belongs to the metallo-beta-lactamase superfamily. The cofactor is Zn(2+).

In terms of biological role, could play a role in cell adherence or biofilm development. In Agrobacterium fabrum (strain C58 / ATCC 33970) (Agrobacterium tumefaciens (strain C58)), this protein is Beta-lactamase hydrolase-like protein.